We begin with the raw amino-acid sequence, 474 residues long: Cyclin-dependent kinase 18 (474 aa).

Phosphoserine is present on residues Ser-14, Ser-74, Ser-89, Ser-98, Ser-117, and Ser-132. The disordered stretch occupies residues 44-87 (DLQLGPLGRDPLQECSTFSPTDSGEEPGQLSPGVQFQRRQNQRR). Residues 144-425 (YVKLDKLGEG…AEAALSHPYF (282 aa)) form the Protein kinase domain. ATP-binding positions include 150–158 (LGEGTYATV) and Lys-173. Asp-265 (proton acceptor) is an active-site residue. Phosphoserine is present on residues Ser-440 and Ser-443.

This sequence belongs to the protein kinase superfamily. CMGC Ser/Thr protein kinase family. CDC2/CDKX subfamily.

The enzyme catalyses L-seryl-[protein] + ATP = O-phospho-L-seryl-[protein] + ADP + H(+). It carries out the reaction L-threonyl-[protein] + ATP = O-phospho-L-threonyl-[protein] + ADP + H(+). Functionally, may play a role in signal transduction cascades in terminally differentiated cells. The protein is Cyclin-dependent kinase 18 (CDK18) of Pongo abelii (Sumatran orangutan).